Consider the following 63-residue polypeptide: Bowman-Birk type proteinase inhibitor (63 aa).

Intrachain disulfides connect Cys8–Cys61, Cys9–Cys24, Cys12–Cys57, Cys14–Cys22, Cys31–Cys38, Cys35–Cys50, and Cys40–Cys48.

The protein belongs to the Bowman-Birk serine protease inhibitor family.

Its function is as follows. This inhibitor has two domains, each with separate antiprotease activity. Inhibits bovine trypsin and chymotrypsin, in a molar ratio of 1:1. The trypsin inhibition of FBI is independent of chymotrypsin inhibition, but the chymotrypsin inhibition is not completely independent of trypsin inhibition. This is Bowman-Birk type proteinase inhibitor from Vicia faba (Broad bean).